Here is a 470-residue protein sequence, read N- to C-terminus: Acetyl-CoA decarbonylase/synthase complex subunit gamma (470 aa).

Residues 1–62 (MKVKSPLEVY…DPKVKKKLEE (62 aa)) form the 4Fe-4S domain. Residues cysteine 18, cysteine 21, cysteine 26, and cysteine 43 each coordinate [4Fe-4S] cluster.

Heterodimer of delta and gamma chains. The ACDS complex is made up of alpha, epsilon, beta, gamma and delta chains with a probable stoichiometry of (alpha(2)epsilon(2))(4)-beta(8)-(gamma(1)delta(1))(8). It depends on corrinoid as a cofactor. The cofactor is [4Fe-4S] cluster.

The enzyme catalyses 5,6,7,8-tetrahydrosarcinapterin + methyl-Co(III)-[corrinoid Fe-S protein] = 5-methyltetrahydrosarcinapterin + Co(I)-[corrinoid Fe-S protein] + H(+). In terms of biological role, part of a complex that catalyzes the reversible cleavage of acetyl-CoA, allowing autotrophic growth from CO(2). This is Acetyl-CoA decarbonylase/synthase complex subunit gamma from Archaeoglobus fulgidus (strain ATCC 49558 / DSM 4304 / JCM 9628 / NBRC 100126 / VC-16).